Here is a 304-residue protein sequence, read N- to C-terminus: PTB domain-containing engulfment adapter protein 1 (304 aa).

Thr-16 is subject to Phosphothreonine. A PID domain is found at 21–176 (SKHFIPYNAK…AGLQKRIQDL (156 aa)). The stretch at 158 to 202 (KDVETRKQIAGLQKRIQDLETENMELKNKVQDLENQLRITQVSAP) forms a coiled coil. Ser-223 is modified (phosphoserine). Positions 223-246 (SPISHQSSMPTRNGTQPPPVPSRS) are disordered. The segment covering 225–237 (ISHQSSMPTRNGT) has biased composition (polar residues).

Belongs to the ced-6 family. Homodimer. Interacts with clathrin. Interacts with GDP-bound ARF6, but not with GTP-bound ARF6. Part of a complex composed of GULP1, ACAP1 and ARF6. Interacts with ACAP1, LRP1, MEGF10 and STAB2. Widely expressed. Detected in macrophages, pancreas, kidney, skeletal muscle, heart, colon, intestine, lung, placenta and ovary.

Its subcellular location is the cytoplasm. In terms of biological role, may function as an adapter protein. Required for efficient phagocytosis of apoptotic cells. Modulates cellular glycosphingolipid and cholesterol transport. May play a role in the internalization and endosomal trafficking of various LRP1 ligands, such as PSAP. Increases cellular levels of GTP-bound ARF6. The chain is PTB domain-containing engulfment adapter protein 1 (GULP1) from Homo sapiens (Human).